The primary structure comprises 158 residues: Protein BTG2 (158 aa).

Position 147 is a phosphoserine; by MAPK1 and MAPK3 (Ser147). Ser149 carries the post-translational modification Phosphoserine; by MAPK14.

This sequence belongs to the BTG family. Interacts with PRKCABP. Interacts with CNOT7 and CNOT8; indicative for an association with the CCR4-NOT complex. Interacts with PIN1, inducing mitochondrial depolarization. Post-translationally, phosphorylated at Ser-147 by MAPK1/ERK2 and MAPK3/ERK1, and at Ser-149 by MAPK14, leading to PIN1-binding and mitochondrial depolarization.

Anti-proliferative protein; the function is mediated by association with deadenylase subunits of the CCR4-NOT complex. Activates mRNA deadenylation in a CNOT6 and CNOT7-dependent manner. In vitro can inhibit deadenylase activity of CNOT7 and CNOT8. Involved in cell cycle regulation. Could be involved in the growth arrest and differentiation of the neuronal precursors. Modulates transcription regulation mediated by ESR1. Involved in mitochondrial depolarization and neurite outgrowth. In Homo sapiens (Human), this protein is Protein BTG2 (BTG2).